A 231-amino-acid chain; its full sequence is Urease subunit gamma/beta (231 aa).

Positions 1 to 101 (MLLTPTELER…LVTVHQPIRP (101 aa)) are urease gamma. The interval 102 to 231 (GKLPLAVMPT…RARAQHFKGA (130 aa)) is urease beta.

It in the N-terminal section; belongs to the urease gamma subunit family. In the C-terminal section; belongs to the urease beta subunit family. In terms of assembly, heterohexamer of 3 UreC (alpha) and 3 UreAB (gamma/beta) subunits.

The protein resides in the cytoplasm. The enzyme catalyses urea + 2 H2O + H(+) = hydrogencarbonate + 2 NH4(+). It functions in the pathway nitrogen metabolism; urea degradation; CO(2) and NH(3) from urea (urease route): step 1/1. This chain is Urease subunit gamma/beta, found in Pseudomonas syringae pv. tomato (strain ATCC BAA-871 / DC3000).